A 256-amino-acid chain; its full sequence is Imidazole glycerol phosphate synthase subunit HisF (256 aa).

Active-site residues include Asp11 and Asp130.

It belongs to the HisA/HisF family. Heterodimer of HisH and HisF.

The protein resides in the cytoplasm. It catalyses the reaction 5-[(5-phospho-1-deoxy-D-ribulos-1-ylimino)methylamino]-1-(5-phospho-beta-D-ribosyl)imidazole-4-carboxamide + L-glutamine = D-erythro-1-(imidazol-4-yl)glycerol 3-phosphate + 5-amino-1-(5-phospho-beta-D-ribosyl)imidazole-4-carboxamide + L-glutamate + H(+). It participates in amino-acid biosynthesis; L-histidine biosynthesis; L-histidine from 5-phospho-alpha-D-ribose 1-diphosphate: step 5/9. Its function is as follows. IGPS catalyzes the conversion of PRFAR and glutamine to IGP, AICAR and glutamate. The HisF subunit catalyzes the cyclization activity that produces IGP and AICAR from PRFAR using the ammonia provided by the HisH subunit. This chain is Imidazole glycerol phosphate synthase subunit HisF, found in Cupriavidus necator (strain ATCC 17699 / DSM 428 / KCTC 22496 / NCIMB 10442 / H16 / Stanier 337) (Ralstonia eutropha).